The sequence spans 129 residues: Small ribosomal subunit protein uS9 (129 aa).

This sequence belongs to the universal ribosomal protein uS9 family.

The protein is Small ribosomal subunit protein uS9 (rpsI) of Treponema pallidum (strain Nichols).